A 261-amino-acid chain; its full sequence is 22 kDa alpha-zein 8b (261 aa).

The first 16 residues, 1–16 (LALLALLALFVSATNA), serve as a signal peptide directing secretion.

It belongs to the zein family.

Functionally, zeins are major seed storage proteins. The polypeptide is 22 kDa alpha-zein 8b (Zea mays (Maize)).